Consider the following 189-residue polypeptide: Recombination protein RecR (189 aa).

The segment at 48–63 adopts a C4-type zinc-finger fold; it reads CQTCFHLSAEPTCEIC. Positions 71–165 constitute a Toprim domain; sequence GMLCVVADSR…EVSRIAYGLP (95 aa).

The protein belongs to the RecR family.

In terms of biological role, may play a role in DNA repair. It seems to be involved in an RecBC-independent recombinational process of DNA repair. It may act with RecF and RecO. The chain is Recombination protein RecR from Synechococcus sp. (strain CC9311).